The chain runs to 173 residues: Large ribosomal subunit protein uL10 (173 aa).

Belongs to the universal ribosomal protein uL10 family. In terms of assembly, part of the ribosomal stalk of the 50S ribosomal subunit. The N-terminus interacts with L11 and the large rRNA to form the base of the stalk. The C-terminus forms an elongated spine to which L12 dimers bind in a sequential fashion forming a multimeric L10(L12)X complex.

In terms of biological role, forms part of the ribosomal stalk, playing a central role in the interaction of the ribosome with GTP-bound translation factors. This is Large ribosomal subunit protein uL10 from Oleidesulfovibrio alaskensis (strain ATCC BAA-1058 / DSM 17464 / G20) (Desulfovibrio alaskensis).